Here is a 309-residue protein sequence, read N- to C-terminus: Aspartate carbamoyltransferase catalytic subunit (309 aa).

Carbamoyl phosphate is bound by residues R49 and T50. K77 is an L-aspartate binding site. Carbamoyl phosphate contacts are provided by R99, H127, and Q130. R160 and R211 together coordinate L-aspartate. The carbamoyl phosphate site is built by A252 and P253.

Belongs to the aspartate/ornithine carbamoyltransferase superfamily. ATCase family. In terms of assembly, heterododecamer (2C3:3R2) of six catalytic PyrB chains organized as two trimers (C3), and six regulatory PyrI chains organized as three dimers (R2).

It catalyses the reaction carbamoyl phosphate + L-aspartate = N-carbamoyl-L-aspartate + phosphate + H(+). The protein operates within pyrimidine metabolism; UMP biosynthesis via de novo pathway; (S)-dihydroorotate from bicarbonate: step 2/3. In terms of biological role, catalyzes the condensation of carbamoyl phosphate and aspartate to form carbamoyl aspartate and inorganic phosphate, the committed step in the de novo pyrimidine nucleotide biosynthesis pathway. This chain is Aspartate carbamoyltransferase catalytic subunit, found in Geobacillus sp. (strain WCH70).